The chain runs to 438 residues: Aspartyl protease 25 (438 aa).

The signal sequence occupies residues 1-23 (MAATTTIPLLLLLLAATVAAAAA). The region spanning 79–433 (YVVRAGLGSP…DVANSRVGFA (355 aa)) is the Peptidase A1 domain. Residue aspartate 97 is part of the active site. An intrachain disulfide couples cysteine 107 to cysteine 113. N-linked (GlcNAc...) asparagine glycosylation is found at asparagine 123, asparagine 193, and asparagine 282. Aspartate 313 is a catalytic residue. A disulfide bond links cysteine 352 and cysteine 394.

Belongs to the peptidase A1 family.

Its function is as follows. Anther-specific aspartic protease involved in tapetal programmed cell death (PCD). Directly regulated by the transcription factor EAT1/DTD in anthers during tapetum PCD and degeneration. The protein is Aspartyl protease 25 of Oryza sativa subsp. japonica (Rice).